The sequence spans 110 residues: Large ribosomal subunit protein uL22 (110 aa).

Belongs to the universal ribosomal protein uL22 family. As to quaternary structure, part of the 50S ribosomal subunit.

Functionally, this protein binds specifically to 23S rRNA; its binding is stimulated by other ribosomal proteins, e.g. L4, L17, and L20. It is important during the early stages of 50S assembly. It makes multiple contacts with different domains of the 23S rRNA in the assembled 50S subunit and ribosome. The globular domain of the protein is located near the polypeptide exit tunnel on the outside of the subunit, while an extended beta-hairpin is found that lines the wall of the exit tunnel in the center of the 70S ribosome. This chain is Large ribosomal subunit protein uL22, found in Paraburkholderia phytofirmans (strain DSM 17436 / LMG 22146 / PsJN) (Burkholderia phytofirmans).